Here is a 2039-residue protein sequence, read N- to C-terminus: PHD finger protein 3 (2039 aa).

Residues Ser-97 and Ser-125 each carry the phosphoserine modification. Residues 144-168 are compositionally biased toward polar residues; that stretch reads STIAKRSNAAPLSNTKKASGKTVST. Residues 144–178 form a disordered region; sequence STIAKRSNAAPLSNTKKASGKTVSTAKAGVKQPER. Phosphoserine occurs at positions 283 and 299. Over residues 460 to 472 the composition is skewed to basic and acidic residues; that stretch reads ESHETANLQDDRN. Disordered regions lie at residues 460–492, 528–555, and 596–685; these read ESHETANLQDDRNSQSSSVSYLESKSVKSKHTK, VKRNTDVPESQQNFHRPVKVRKKQIDKE, and LSDK…SLDE. Residues 473–483 show a composition bias toward low complexity; it reads SQSSSVSYLES. Basic and acidic residues predominate over residues 596–612; the sequence is LSDKSHAHPGCLKEPHH. Positions 617–640 are enriched in polar residues; sequence GHVSHSSQKQCHKPQQQAPAMKTN. Residues 642 to 670 are compositionally biased toward basic and acidic residues; sequence HVKEELEHPGVEHFKEEDKLKLKKPEKNL. Lys-644 participates in a covalent cross-link: Glycyl lysine isopeptide (Lys-Gly) (interchain with G-Cter in SUMO2). At Ser-680 the chain carries Phosphoserine. The PHD-type zinc-finger motif lies at 717–772; it reads SKQCGFCKKPHGNRFMVGCGRCDDWFHGDCVGLSLSQAQQMGEEDKEYVCVKCCAE. The interval 860-904 is disordered; sequence GQPVLPRRSSEEKSEKIPKESTTVTCTGEKASKPGTHEKQEMKKK. Composition is skewed to basic and acidic residues over residues 867–878 and 889–900; these read RSSEEKSEKIPK and KASKPGTHEKQE. Positions 927–1046 constitute a TFIIS central domain; that stretch reads IRQSVRHSLK…MIEKEQREVE (120 aa). Lys-964 is covalently cross-linked (Glycyl lysine isopeptide (Lys-Gly) (interchain with G-Cter in SUMO2)). At Ser-1014 the chain carries Phosphoserine. The disordered stretch occupies residues 1078 to 1109; the sequence is EPAANKSLEKPEGSEKQKEEVDSMSKDTTSQH. Residues 1084 to 1102 are compositionally biased toward basic and acidic residues; that stretch reads SLEKPEGSEKQKEEVDSMS. Phosphoserine occurs at positions 1133, 1148, and 1178. Disordered regions lie at residues 1171 to 1191, 1360 to 1380, and 1581 to 1623; these read FEEEKQESPKSTFSPAPRPEM, STSHIAETPESAPPIALPPDK, and KQEE…VGKG. A compositionally biased stretch (basic and acidic residues) spans 1581–1598; it reads KQEETVESKEKTLKRQLQ. A phosphoserine mark is found at Ser-1614 and Ser-1642. Disordered stretches follow at residues 1643–1684 and 1776–1800; these read PQFI…LPGL and PSKSITFTSRSTSPRTSTNFSPMRP. The span at 1666-1684 shows a compositional bias: basic and acidic residues; sequence ESKDGDSCRNGEKHMLPGL. Low complexity predominate over residues 1781 to 1797; sequence TFTSRSTSPRTSTNFSP. Asymmetric dimethylarginine occurs at positions 1867 and 1877. The disordered stretch occupies residues 1884-2039; sequence FYQVKDIRRP…DHTDRTKSKR (156 aa). Composition is skewed to basic and acidic residues over residues 1888–1902 and 1912–2039; these read KDIRRPERRHSDPWG and PFNR…KSKR. Phosphoserine is present on residues Ser-1898 and Ser-1925. Lys-1931 is covalently cross-linked (Glycyl lysine isopeptide (Lys-Gly) (interchain with G-Cter in SUMO2)).

Ubiquitous. Expression is significantly reduced or lost in glioblastomas, glioblastoma cell lines, anaplastic astrocytomas, and astrocytomas.

The polypeptide is PHD finger protein 3 (PHF3) (Homo sapiens (Human)).